Here is a 421-residue protein sequence, read N- to C-terminus: Tyrosine--tRNA ligase (421 aa).

Position 42 (Y42) interacts with L-tyrosine. Positions 47 to 56 (CTAPSLHVGS) match the 'HIGH' region motif. The L-tyrosine site is built by Y179 and Q183. Residues 239-243 (KMGKT) carry the 'KMSKS' region motif. ATP is bound at residue K242. The S4 RNA-binding domain occupies 354 to 419 (LGILAAFAKA…RKKHVLLRLA (66 aa)).

The protein belongs to the class-I aminoacyl-tRNA synthetase family. TyrS type 1 subfamily. In terms of assembly, homodimer.

It localises to the cytoplasm. The enzyme catalyses tRNA(Tyr) + L-tyrosine + ATP = L-tyrosyl-tRNA(Tyr) + AMP + diphosphate + H(+). Catalyzes the attachment of tyrosine to tRNA(Tyr) in a two-step reaction: tyrosine is first activated by ATP to form Tyr-AMP and then transferred to the acceptor end of tRNA(Tyr). The chain is Tyrosine--tRNA ligase from Beijerinckia indica subsp. indica (strain ATCC 9039 / DSM 1715 / NCIMB 8712).